A 92-amino-acid polypeptide reads, in one-letter code: uncharacterized protein (92 aa).

This is an uncharacterized protein from Escherichia coli O157:H7.